The primary structure comprises 240 residues: Protein unc-119 homolog A (240 aa).

The span at 1–12 shows a compositional bias: gly residues; that stretch reads MKVKKGGGGTGS. Residues 1-62 form a disordered region; that stretch reads MKVKKGGGGT…PLQGKQPIGP (62 aa). A phosphoserine; by CK2 mark is found at serine 37, serine 39, and serine 41. Position 131 (tyrosine 131) interacts with tetradecanoate.

This sequence belongs to the PDE6D/unc-119 family. In terms of assembly, may interact with GTP-bound ARL1. Interacts with ARL2 and ARL3 (GTP-bound forms); this promotes the release of myristoylated cargo proteins. Found in a complex with ARL3, RP2 and UNC119; RP2 induces hydrolysis of GTP ARL3 in the complex, leading to the release of UNC119. Interacts with NPHP3 (when myristoylated). Interacts with CYS1 (when myristoylated). Interacts with MACIR; interaction only takes place when UNC119 is not liganded with myristoylated proteins. Interacts with CABP4; in the absence of calcium. Interacts with DNM1; leading to a decrease of DNM1 GTPase activity. Interacts with LCK; this interaction plays a crucial role in activation of LCK. Interacts with FYN. Interacts with RAB11A; in a cell cycle-dependent manner. Interacts with LYN (via SH2 and SH3 domains); leading to LYN activation. Found in a complex with ABL1, ABL2, CRK and UNC119; leading to the inhibition of CRK phosphorylation by ABL kinases. Interacts with CD44. Interacts with KLHL18 (via kelch repeats). Interacts with PPP3CA, PPP3CB and PPP3CC. Interacts with USP48; this interaction promotes UNC119 stability. In terms of processing, phosphorylation suppresses its interaction with KLHL18 and down-regulates its KLHL18-mediated degradation. Phosphorylated more under light conditions than dark conditions. Dephosphorylated by calcineurin. In terms of tissue distribution, localized in photoreceptor synapses in the outer plexiform layer of the retina.

It is found in the cytoplasm. The protein resides in the cytoskeleton. It localises to the microtubule organizing center. The protein localises to the centrosome. Its subcellular location is the spindle. It is found in the spindle pole. Its function is as follows. Involved in synaptic functions in photoreceptor cells, the signal transduction in immune cells as a Src family kinase activator, endosome recycling, the uptake of bacteria and endocytosis, protein trafficking in sensory neurons and as lipid-binding chaperone with specificity for a diverse subset of myristoylated proteins. Specifically binds the myristoyl moiety of a subset of N-terminally myristoylated proteins and is required for their localization. Binds myristoylated GNAT1 and is required for G-protein localization and trafficking in sensory neurons. Probably plays a role in trafficking proteins in photoreceptor cells. Plays important roles in mediating Src family kinase signals for the completion of cytokinesis via RAB11A. This chain is Protein unc-119 homolog A (Unc119), found in Mus musculus (Mouse).